The following is a 382-amino-acid chain: Alkane 1-monooxygenase 1 (382 aa).

4 helical membrane passes run 10–30, 43–63, 90–110, and 121–141; these read MLAI…SMPF, FWAF…DMLF, LATV…FVAF, and WILS…HELI. Fe cation is bound by residues histidine 138 and histidine 142. The helical transmembrane segment at 146–166 threads the bilayer; sequence ALEQAAGGILLAAVCYAGFKV. Fe cation-binding residues include histidine 168, histidine 172, and histidine 173. Residues 236-256 form a helical membrane-spanning segment; the sequence is LALLVGFGWAFGWLGMVFFLG. The Fe cation site is built by histidine 312, histidine 315, and histidine 316.

This sequence belongs to the fatty acid desaturase type 1 family. AlkB subfamily. It depends on Fe(3+) as a cofactor.

The protein resides in the cell inner membrane. The catalysed reaction is octane + 2 reduced [rubredoxin] + O2 + 2 H(+) = 2 oxidized [rubredoxin] + octan-1-ol + H2O. It functions in the pathway hydrocarbon metabolism; alkane degradation. Catalyzes the hydroxylation of n-alkanes in the presence of a NADH-rubredoxin reductase and rubredoxin. It preferably hydroxylases C16-C24 hydrocarbons. The polypeptide is Alkane 1-monooxygenase 1 (alkB1) (Pseudomonas aeruginosa (strain ATCC 15692 / DSM 22644 / CIP 104116 / JCM 14847 / LMG 12228 / 1C / PRS 101 / PAO1)).